The chain runs to 486 residues: ATP synthase subunit beta (486 aa).

Positions 1–12 are enriched in basic and acidic residues; it reads MTTTAEKTDRPG. Residues 1 to 22 are disordered; the sequence is MTTTAEKTDRPGKPGSSDTSGR. 171 to 178 contributes to the ATP binding site; that stretch reads GGAGVGKT.

This sequence belongs to the ATPase alpha/beta chains family. F-type ATPases have 2 components, CF(1) - the catalytic core - and CF(0) - the membrane proton channel. CF(1) has five subunits: alpha(3), beta(3), gamma(1), delta(1), epsilon(1). CF(0) has three main subunits: a(1), b(2) and c(9-12). The alpha and beta chains form an alternating ring which encloses part of the gamma chain. CF(1) is attached to CF(0) by a central stalk formed by the gamma and epsilon chains, while a peripheral stalk is formed by the delta and b chains.

The protein resides in the cell membrane. The enzyme catalyses ATP + H2O + 4 H(+)(in) = ADP + phosphate + 5 H(+)(out). Produces ATP from ADP in the presence of a proton gradient across the membrane. The catalytic sites are hosted primarily by the beta subunits. The chain is ATP synthase subunit beta from Mycobacterium tuberculosis (strain ATCC 25177 / H37Ra).